The chain runs to 390 residues: Caveolae-associated protein 1 (390 aa).

M1 is modified (N-acetylmethionine). The segment at 1-40 (MEDPTLYIVERPLPGYPDAEAPEPSSAGAQAAEEPSGAGS) is disordered. Positions 1 to 98 (MEDPTLYIVE…IQGELSKLGK (98 aa)) are required for homotrimerization and for interaction with CAVIN2 and CAVIN3. Positions 22–40 (PEPSSAGAQAAEEPSGAGS) are enriched in low complexity. Phosphoserine is present on residues S36, S40, and S46. Residues 52–62 (VLVLSLLDKII) form a nuclear export signal region. Residues 53–75 (LVLSLLDKIIGAVDQIQLTQAQL) form a leucine-zipper 1 region. K116 is covalently cross-linked (Glycyl lysine isopeptide (Lys-Gly) (interchain with G-Cter in SUMO2)). Phosphoserine is present on S118. A Glycyl lysine isopeptide (Lys-Gly) (interchain with G-Cter in SUMO2) cross-link involves residue K122. Residues 136–152 (KKLEVNEAELLRRRNFK) form a nuclear localization signal region. The residue at position 156 (Y156) is a Phosphotyrosine. K161 participates in a covalent cross-link: Glycyl lysine isopeptide (Lys-Gly) (interchain with G-Cter in SUMO1); alternate. K161 is covalently cross-linked (Glycyl lysine isopeptide (Lys-Gly) (interchain with G-Cter in SUMO2); alternate). K165 participates in a covalent cross-link: Glycyl lysine isopeptide (Lys-Gly) (interchain with G-Cter in SUMO2). The segment at 166–186 (LSISKSLKESEALPEKEGEEL) is leucine-zipper 2. Residues S167 and S169 each carry the phosphoserine modification. Residue K170 forms a Glycyl lysine isopeptide (Lys-Gly) (interchain with G-Cter in SUMO2) linkage. A phosphoserine mark is found at S171 and S175. A compositionally biased stretch (basic and acidic residues) spans 172-181 (LKESEALPEK). The disordered stretch occupies residues 172 to 201 (LKESEALPEKEGEELGEGERPEEDAAALEL). Over residues 182–201 (EGEELGEGERPEEDAAALEL) the composition is skewed to acidic residues. A coiled-coil region spans residues 199-282 (LELSSDEAVE…RMNKLGTRLV (84 aa)). S202 and S203 each carry phosphoserine. The interval 233–249 (KKAFSKEKMEKTKVRTR) is nuclear localization signal. Residues 257–297 (LKTKENLEKTRHTLEKRMNKLGTRLVPAERREKLKTSRDKL) form a leucine-zipper 3 region. At S300 the chain carries Phosphoserine. Residue T302 is modified to Phosphothreonine. Position 308 is a phosphotyrosine (Y308). K326 participates in a covalent cross-link: Glycyl lysine isopeptide (Lys-Gly) (interchain with G-Cter in SUMO2). The interval 344 to 366 (VGADDDEGGAERGEAGDLRRGSS) is disordered. Over residues 352 to 365 (GAERGEAGDLRRGS) the composition is skewed to basic and acidic residues. Residues S365, S366, S379, S387, and S389 each carry the phosphoserine modification.

The protein belongs to the CAVIN family. In terms of assembly, component of the CAVIN complex composed of CAVIN1, CAVIN2, CAVIN3 and CAVIN4. Homotrimer. Interacts with TTF1. Interacts with RNA polymerase I subunit POLR1A/RPA1. Binds the 3' end of pre-rRNA. Interacts with transcription factor ZNF148. Interacts with LIPE in the adipocyte cytoplasm. Interacts with CAV1 and CAVIN3. Interacts with CAVIN2. Interacts with CAVIN4 and CAV3. Phosphorylated. Present in active and inactive forms. Changes in phosphorylation pattern may alter activity. Phosphorylation at Tyr-156 is essential for its functionin the regulation of ribosomal transcriptional activity. In terms of processing, five truncated forms are found in the caveolae. These are thought to be the result of proteolysis and may be phosphorylation-dependent. Post-translationally, monoubiquitinated.

The protein localises to the membrane. It is found in the caveola. The protein resides in the cell membrane. It localises to the microsome. Its subcellular location is the endoplasmic reticulum. The protein localises to the cytoplasm. It is found in the cytosol. The protein resides in the mitochondrion. It localises to the nucleus. In terms of biological role, plays an important role in caveolae formation and organization. Essential for the formation of caveolae in all tissues. Core component of the CAVIN complex which is essential for recruitment of the complex to the caveolae in presence of calveolin-1 (CAV1). Essential for normal oligomerization of CAV1. Promotes ribosomal transcriptional activity in response to metabolic challenges in the adipocytes and plays an important role in the formation of the ribosomal transcriptional loop. Dissociates transcription complexes paused by DNA-bound TTF1, thereby releasing both RNA polymerase I and pre-RNA from the template. The caveolae biogenesis pathway is required for the secretion of proteins such as GASK1A. The polypeptide is Caveolae-associated protein 1 (Homo sapiens (Human)).